A 246-amino-acid chain; its full sequence is UDP-N-acetyl-D-mannosaminuronic acid transferase (246 aa).

It belongs to the glycosyltransferase 26 family.

The catalysed reaction is UDP-N-acetyl-alpha-D-mannosaminouronate + N-acetyl-alpha-D-glucosaminyl-di-trans,octa-cis-undecaprenyl diphosphate = beta-D-ManNAcA-(1-&gt;4)-alpha-D-GlcNAc-di-trans,octa-cis-undecaprenyl diphosphate + UDP + H(+). It functions in the pathway bacterial outer membrane biogenesis; enterobacterial common antigen biosynthesis. Functionally, catalyzes the synthesis of Und-PP-GlcNAc-ManNAcA (Lipid II), the second lipid-linked intermediate involved in enterobacterial common antigen (ECA) synthesis. The sequence is that of UDP-N-acetyl-D-mannosaminuronic acid transferase from Escherichia coli O1:K1 / APEC.